The following is a 311-amino-acid chain: Metal-staphylopine import system permease protein CntB (311 aa).

6 helical membrane passes run 9–29, 105–125, 139–159, 173–193, 237–257, and 274–294; these read IALM…LTYI, LTII…VVSA, VAFF…IIYV, GPES…GIYF, IFCM…YIFA, and FPVI…FNTL. The region spanning 99–295 is the ABC transmembrane type-1 domain; it reads FMNTLKLTII…VLFIVFNTLA (197 aa).

The protein belongs to the binding-protein-dependent transport system permease family. In terms of assembly, the complex is composed of two ATP-binding proteins (CntD and CntF), two transmembrane proteins (CntB and CntC) and a solute-binding protein (CntA).

The protein localises to the cell membrane. Its activity is regulated as follows. Nickel/cobalt import is reduced in the presence of zinc. Its function is as follows. Part of the ABC transporter complex CntABCDF (Opp1) involved in the uptake of metal in complex with the metallophore staphylopine (StP). Involved in the import of divalent metals ions such as nickel, cobalt and zinc. Probably responsible for the translocation of the substrate across the membrane. Plays a major role in nickel/cobalt import in zinc-depleted conditions. Contributes to virulence. Required for full urease activity in vitro. This Staphylococcus aureus (strain NCTC 8325 / PS 47) protein is Metal-staphylopine import system permease protein CntB.